A 132-amino-acid chain; its full sequence is ATP synthase epsilon chain (132 aa).

It belongs to the ATPase epsilon chain family. In terms of assembly, F-type ATPases have 2 components, CF(1) - the catalytic core - and CF(0) - the membrane proton channel. CF(1) has five subunits: alpha(3), beta(3), gamma(1), delta(1), epsilon(1). CF(0) has three main subunits: a, b and c.

The protein resides in the cell inner membrane. Functionally, produces ATP from ADP in the presence of a proton gradient across the membrane. The polypeptide is ATP synthase epsilon chain (atpC) (Aquifex aeolicus (strain VF5)).